Consider the following 159-residue polypeptide: Protein phosphatase 1 regulatory subunit 17 (159 aa).

Disordered stretches follow at residues 1 to 79 (MSTE…HIPP) and 98 to 127 (RIPKAKSGPALHNSDMEQKRPRRKDTPALH). Composition is skewed to basic and acidic residues over residues 62 to 73 (SDQKKPRRKDTP) and 111 to 124 (SDMEQKRPRRKDTP). Residues T72 and T123 each carry the phosphothreonine; by PKG/PRKG1 modification.

In terms of processing, substrate for cGMP-dependent protein kinase. Phosphorylation of Thr-72 and Thr-123 is required for its phosphatase activity. Phosphorylated by PRKG1 isoform alpha. Expressed in Purkinje cells of the cerebellum, hippocampus, pons, medulla and eye.

Inhibits phosphatase activities of protein phosphatase 1 (PP1) and protein phosphatase 2A (PP2A) complexes. This chain is Protein phosphatase 1 regulatory subunit 17 (Ppp1r17), found in Mus musculus (Mouse).